Consider the following 492-residue polypeptide: MNDQTRQRLLNLEALVEAGFAPYPYRFPKTHSAEAILKAKRGAPPESEWPEEEVAVAGRLVALRRMGKVTFAHLLDETGRIQLYFQRDLTPKYELLKKLDVGDILGVRGHPFTTKTGEVTVKVLDWTPLVKSLHPLPDKWHGLRDKEVRYRQRYLDLIVNPEVREVFRRRSEIVRYIRRFFEAKGFLEVETPILQPTTGGAEARPFKTYHNALDHEFYLRISLELYLKRLLVGGYEKVFEIGRNFRNEGIDHNHNPEFTMLEAYWAYADYQDMAGLVEELLSGLVLHLFGSHEVPYQGRVLNFKPPFRRISFVEALKEKAGLPFDPLDLERLRLWADAHHPELSQVPNYKLLDKLFGIYVEPELQDPTFVFDFPLAISPLAKRHREKPGLVERWDLYAGGMELAPCYSELNDPLDQRERFLEQARRRKEGDEEAPEPDEDFLLALEYGMPPAAGLGLGIDRLAMLLTDQPSLRDVLLFPLLKPKKEAVEEGV.

Positions 395 and 402 each coordinate Mg(2+).

Belongs to the class-II aminoacyl-tRNA synthetase family. As to quaternary structure, homodimer. It depends on Mg(2+) as a cofactor.

The protein resides in the cytoplasm. It catalyses the reaction tRNA(Lys) + L-lysine + ATP = L-lysyl-tRNA(Lys) + AMP + diphosphate. This Thermus thermophilus (strain ATCC BAA-163 / DSM 7039 / HB27) protein is Lysine--tRNA ligase.